Consider the following 555-residue polypeptide: T-complex protein 1 subunit gamma (555 aa).

The tract at residues 527-555 (KKKQAPGSGPSKPTIETEGDADNEQILPD) is disordered.

The protein belongs to the TCP-1 chaperonin family. Heterooligomeric complex of about 850 to 900 kDa that forms two stacked rings, 12 to 16 nm in diameter. Interacts with CCT8.

Its subcellular location is the cytoplasm. Molecular chaperone; assists the folding of proteins upon ATP hydrolysis. Known to play a role, in vitro, in the folding of actin and tubulin. This Arabidopsis thaliana (Mouse-ear cress) protein is T-complex protein 1 subunit gamma.